The following is a 503-amino-acid chain: Probable cytosol aminopeptidase (503 aa).

Residues Lys270 and Asp275 each contribute to the Mn(2+) site. Residue Lys282 is part of the active site. The Mn(2+) site is built by Asp293, Asp352, and Glu354. Arg356 is an active-site residue.

This sequence belongs to the peptidase M17 family. Mn(2+) is required as a cofactor.

It localises to the cytoplasm. It carries out the reaction Release of an N-terminal amino acid, Xaa-|-Yaa-, in which Xaa is preferably Leu, but may be other amino acids including Pro although not Arg or Lys, and Yaa may be Pro. Amino acid amides and methyl esters are also readily hydrolyzed, but rates on arylamides are exceedingly low.. It catalyses the reaction Release of an N-terminal amino acid, preferentially leucine, but not glutamic or aspartic acids.. Functionally, presumably involved in the processing and regular turnover of intracellular proteins. Catalyzes the removal of unsubstituted N-terminal amino acids from various peptides. In Erwinia tasmaniensis (strain DSM 17950 / CFBP 7177 / CIP 109463 / NCPPB 4357 / Et1/99), this protein is Probable cytosol aminopeptidase.